Here is a 333-residue protein sequence, read N- to C-terminus: Tetraacyldisaccharide 4'-kinase (333 aa).

An ATP-binding site is contributed by 60–67 (TVGGTGKT).

Belongs to the LpxK family.

The enzyme catalyses a lipid A disaccharide + ATP = a lipid IVA + ADP + H(+). It functions in the pathway glycolipid biosynthesis; lipid IV(A) biosynthesis; lipid IV(A) from (3R)-3-hydroxytetradecanoyl-[acyl-carrier-protein] and UDP-N-acetyl-alpha-D-glucosamine: step 6/6. Transfers the gamma-phosphate of ATP to the 4'-position of a tetraacyldisaccharide 1-phosphate intermediate (termed DS-1-P) to form tetraacyldisaccharide 1,4'-bis-phosphate (lipid IVA). This chain is Tetraacyldisaccharide 4'-kinase, found in Pseudomonas putida (strain GB-1).